Here is a 624-residue protein sequence, read N- to C-terminus: MKGQETRGFQSEVKQLLHLMIHSLYSNKEIFLRELISNASDAADKLRFRALSNPDLYEGDGELRVRVSFDKDKRTLTIADNGVGMNRDEVIDHLGTIAKSGTKSFLESMGSDQAKDSQLIGQFGVGFYSAFIVADKVTVRTRAAGDKPENGVFWESAGEGEYTVADITKNDRGTEITLHLREGEDEFLDDWRVRSIISKYSDHIALPVEIEKREEKDGETVISWEKINKAQALWTRNKSEIKDDEYNEFYKHIAHDFTDPLTWSHNRVEGKQEYTSLLYIPSQAPWDLWNRDHKHGLKLYVQRVFIMDDAEQFMPNYLRFVRGLIDSNDLPLNVSREILQDSTVTRNLRSALTKRVLQMLEKLAKDDAEKYQTFWKQFGLVLKEGPAEDHANQEAIAKLLRFASTHTDSSAQTVSLEDYVSRMKEGQEKIYYITADSYAAAKNSPHLELLRKKGIEVLLLSDRIDEWMMNYLTEFDGKAFQSVAKADESIEKLADEVDENAKEAEKALEPFVERVKTLLGDRVKEVRLTHRLTDTPAIVTTDADEMSTQMAKLFAAAGQSVPEVKYIFELNPDHVLVKRTADTEDEAQFKEWVELLLDQALFAERGTLEDPNQFIRRMNQLLVS.

The interval 1–336 (MKGQETRGFQ…SNDLPLNVSR (336 aa)) is a; substrate-binding. Residues 337-552 (EILQDSTVTR…ADEMSTQMAK (216 aa)) form a b region. Positions 553-624 (LFAAAGQSVP…IRRMNQLLVS (72 aa)) are c.

It belongs to the heat shock protein 90 family. In terms of assembly, homodimer.

The protein localises to the cytoplasm. Its function is as follows. Molecular chaperone. Has ATPase activity. This Salmonella paratyphi B (strain ATCC BAA-1250 / SPB7) protein is Chaperone protein HtpG.